We begin with the raw amino-acid sequence, 488 residues long: Envelope glycoprotein gp62 (488 aa).

A signal peptide spans M1–G20. Residues D21–A442 are Extracellular-facing. N-linked (GlcNAc...) asparagine; by host glycosylation is found at N140 and N222. Positions C225–C228 match the CXXC motif. Residues N244 and N272 are each glycosylated (N-linked (GlcNAc...) asparagine; by host). Positions A313–G333 are fusion peptide. Coiled coils occupy residues A341–W387 and Q397–L429. The segment at A376–L392 is immunosuppression. An intrachain disulfide couples C393 to C400. Residue N404 is glycosylated (N-linked (GlcNAc...) asparagine; by host). A helical membrane pass occupies residues L443–I463. C462 carries the S-palmitoyl cysteine; by host lipid modification. Residues L464–L488 are Cytoplasmic-facing.

In terms of assembly, the mature envelope protein (Env) consists of a trimer of SU-TM heterodimers attached by non-covalent interactions or by a labile interchain disulfide bond. Post-translationally, specific enzymatic cleavages in vivo yield mature proteins. Envelope glycoproteins are synthesized as an inactive precursor that is N-glycosylated and processed likely by host cell furin or by a furin-like protease in the Golgi to yield the mature SU and TM proteins. The cleavage site between SU and TM requires the minimal sequence [KR]-X-[KR]-R. The transmembrane protein is palmitoylated.

It is found in the virion membrane. It localises to the host cell membrane. In terms of biological role, the surface protein (SU) attaches the virus to the host cell by binding to its receptor. This interaction triggers the refolding of the transmembrane protein (TM) and is thought to activate its fusogenic potential by unmasking its fusion peptide. Fusion occurs at the host cell plasma membrane. The transmembrane protein (TM) acts as a class I viral fusion protein. Under the current model, the protein has at least 3 conformational states: pre-fusion native state, pre-hairpin intermediate state, and post-fusion hairpin state. During viral and target cell membrane fusion, the coiled coil regions (heptad repeats) assume a trimer-of-hairpins structure, positioning the fusion peptide in close proximity to the C-terminal region of the ectodomain. The formation of this structure appears to drive apposition and subsequent fusion of viral and target cell membranes. Membranes fusion leads to delivery of the nucleocapsid into the cytoplasm. The chain is Envelope glycoprotein gp62 (env) from Homo sapiens (Human).